A 345-amino-acid chain; its full sequence is UPF0324 membrane protein RB0971 (345 aa).

10 consecutive transmembrane segments (helical) span residues 13–32, 42–61, 93–115, 130–152, 161–183, 193–215, 228–247, 262–284, 291–310, and 320–342; these read SLSVVLSTYGPGLLVTAAVA, YGAPAMLMALLLGIAFHFLA, LLIGLGGGTILLLVSAIVATILF, ALLTSGAVAICGASAAMAIAAVL, NLIFTVLSVTVLSTLAMIGYPIV, ATGIFFGGTIHDVAQVVGAGFSV, LIRVTMLAPVVLIFSLVLRS, VPGFVLAFLVLAGFNSAGLVPVL, AISRWALLAGIVAVGMKTSL, and AVALVVAETLFIAVFILAGMYYL.

Belongs to the UPF0324 family.

It is found in the cell membrane. The sequence is that of UPF0324 membrane protein RB0971 from Rhizobium meliloti (strain 1021) (Ensifer meliloti).